Consider the following 207-residue polypeptide: Large ribosomal subunit protein uL4 (207 aa).

The disordered stretch occupies residues 47-77; that stretch reads GTADTKTRAEVSGGGRKPWRQKGTGRARHGS. The segment covering 63–77 has biased composition (basic residues); sequence KPWRQKGTGRARHGS.

Belongs to the universal ribosomal protein uL4 family. As to quaternary structure, part of the 50S ribosomal subunit.

Functionally, one of the primary rRNA binding proteins, this protein initially binds near the 5'-end of the 23S rRNA. It is important during the early stages of 50S assembly. It makes multiple contacts with different domains of the 23S rRNA in the assembled 50S subunit and ribosome. In terms of biological role, forms part of the polypeptide exit tunnel. In Symbiobacterium thermophilum (strain DSM 24528 / JCM 14929 / IAM 14863 / T), this protein is Large ribosomal subunit protein uL4.